A 132-amino-acid polypeptide reads, in one-letter code: Small ribosomal subunit protein uS8 (132 aa).

The protein belongs to the universal ribosomal protein uS8 family. Part of the 30S ribosomal subunit. Contacts proteins S5 and S12.

Functionally, one of the primary rRNA binding proteins, it binds directly to 16S rRNA central domain where it helps coordinate assembly of the platform of the 30S subunit. The sequence is that of Small ribosomal subunit protein uS8 from Caldicellulosiruptor bescii (strain ATCC BAA-1888 / DSM 6725 / KCTC 15123 / Z-1320) (Anaerocellum thermophilum).